Consider the following 428-residue polypeptide: GTPase Obg (428 aa).

The Obg domain occupies 1–158 (MFVDQVKIYV…RDVILELKVL (158 aa)). In terms of domain architecture, OBG-type G spans 159–329 (ADVGLVGFPS…LLFEVANLLE (171 aa)). GTP-binding positions include 165-172 (GFPSVGKS), 190-194 (FTTIV), 212-215 (DLPG), 282-285 (NKMD), and 310-312 (SAV). Residues S172 and T192 each coordinate Mg(2+). In terms of domain architecture, OCT spans 350–428 (KLETEGVKFD…ILEYEFEFID (79 aa)).

The protein belongs to the TRAFAC class OBG-HflX-like GTPase superfamily. OBG GTPase family. Monomer. Requires Mg(2+) as cofactor.

It localises to the cytoplasm. In terms of biological role, an essential GTPase which binds GTP, GDP and possibly (p)ppGpp with moderate affinity, with high nucleotide exchange rates and a fairly low GTP hydrolysis rate. Plays a role in control of the cell cycle, stress response, ribosome biogenesis and in those bacteria that undergo differentiation, in morphogenesis control. This is GTPase Obg from Bacillus cereus (strain Q1).